The sequence spans 91 residues: Small ribosomal subunit protein bS20 (91 aa).

Residues 1–23 (MANTPSAKKRAKQAEKRRSHNAS) form a disordered region. Basic residues predominate over residues 7–20 (AKKRAKQAEKRRSH).

It belongs to the bacterial ribosomal protein bS20 family.

Binds directly to 16S ribosomal RNA. This chain is Small ribosomal subunit protein bS20, found in Pseudomonas paraeruginosa (strain DSM 24068 / PA7) (Pseudomonas aeruginosa (strain PA7)).